Reading from the N-terminus, the 124-residue chain is Small ribosomal subunit protein bS6 (124 aa).

The interval 99 to 124 (PLPAPRIVPGSEPEPVEQQEAAAVEA) is disordered. The span at 114-124 (VEQQEAAAVEA) shows a compositional bias: low complexity.

This sequence belongs to the bacterial ribosomal protein bS6 family.

Its function is as follows. Binds together with bS18 to 16S ribosomal RNA. This Prochlorococcus marinus (strain MIT 9303) protein is Small ribosomal subunit protein bS6.